A 263-amino-acid polypeptide reads, in one-letter code: 4-hydroxy-tetrahydrodipicolinate reductase (263 aa).

Residues 8–13, Asp-34, 99–101, and 125–128 each bind NAD(+); these read GACGRM, GTT, and SPNY. Catalysis depends on His-157, which acts as the Proton donor/acceptor. His-158 provides a ligand contact to (S)-2,3,4,5-tetrahydrodipicolinate. The active-site Proton donor is Lys-161. 167–168 is a binding site for (S)-2,3,4,5-tetrahydrodipicolinate; that stretch reads GT.

It belongs to the DapB family.

It localises to the cytoplasm. It catalyses the reaction (S)-2,3,4,5-tetrahydrodipicolinate + NAD(+) + H2O = (2S,4S)-4-hydroxy-2,3,4,5-tetrahydrodipicolinate + NADH + H(+). The catalysed reaction is (S)-2,3,4,5-tetrahydrodipicolinate + NADP(+) + H2O = (2S,4S)-4-hydroxy-2,3,4,5-tetrahydrodipicolinate + NADPH + H(+). Its pathway is amino-acid biosynthesis; L-lysine biosynthesis via DAP pathway; (S)-tetrahydrodipicolinate from L-aspartate: step 4/4. Catalyzes the conversion of 4-hydroxy-tetrahydrodipicolinate (HTPA) to tetrahydrodipicolinate. In Methanosarcina barkeri (strain Fusaro / DSM 804), this protein is 4-hydroxy-tetrahydrodipicolinate reductase.